The following is a 216-amino-acid chain: GTP cyclohydrolase-2 (216 aa).

R51–E55 is a binding site for GTP. Zn(2+) is bound by residues C56, C67, and C69. Residues Q72, E94–R96, and T116 each bind GTP. D128 (proton acceptor) is an active-site residue. Residue R130 is the Nucleophile of the active site. Residues T151 and K156 each coordinate GTP.

It belongs to the GTP cyclohydrolase II family. The cofactor is Zn(2+).

It catalyses the reaction GTP + 4 H2O = 2,5-diamino-6-hydroxy-4-(5-phosphoribosylamino)-pyrimidine + formate + 2 phosphate + 3 H(+). The protein operates within cofactor biosynthesis; riboflavin biosynthesis; 5-amino-6-(D-ribitylamino)uracil from GTP: step 1/4. Catalyzes the conversion of GTP to 2,5-diamino-6-ribosylamino-4(3H)-pyrimidinone 5'-phosphate (DARP), formate and pyrophosphate. The protein is GTP cyclohydrolase-2 of Haemophilus influenzae (strain PittEE).